A 249-amino-acid polypeptide reads, in one-letter code: 1-(5-phosphoribosyl)-5-[(5-phosphoribosylamino)methylideneamino] imidazole-4-carboxamide isomerase (249 aa).

The active-site Proton acceptor is the D8. The Proton donor role is filled by D129.

The protein belongs to the HisA/HisF family.

Its subcellular location is the cytoplasm. The catalysed reaction is 1-(5-phospho-beta-D-ribosyl)-5-[(5-phospho-beta-D-ribosylamino)methylideneamino]imidazole-4-carboxamide = 5-[(5-phospho-1-deoxy-D-ribulos-1-ylimino)methylamino]-1-(5-phospho-beta-D-ribosyl)imidazole-4-carboxamide. It participates in amino-acid biosynthesis; L-histidine biosynthesis; L-histidine from 5-phospho-alpha-D-ribose 1-diphosphate: step 4/9. The polypeptide is 1-(5-phosphoribosyl)-5-[(5-phosphoribosylamino)methylideneamino] imidazole-4-carboxamide isomerase (Rhizobium rhizogenes (strain K84 / ATCC BAA-868) (Agrobacterium radiobacter)).